Here is a 376-residue protein sequence, read N- to C-terminus: ATP phosphoribosyltransferase regulatory subunit (376 aa).

It belongs to the class-II aminoacyl-tRNA synthetase family. HisZ subfamily. Heteromultimer composed of HisG and HisZ subunits.

The protein localises to the cytoplasm. It functions in the pathway amino-acid biosynthesis; L-histidine biosynthesis; L-histidine from 5-phospho-alpha-D-ribose 1-diphosphate: step 1/9. In terms of biological role, required for the first step of histidine biosynthesis. May allow the feedback regulation of ATP phosphoribosyltransferase activity by histidine. The sequence is that of ATP phosphoribosyltransferase regulatory subunit from Brucella ovis (strain ATCC 25840 / 63/290 / NCTC 10512).